Here is a 137-residue protein sequence, read N- to C-terminus: Small ribosomal subunit protein uS12 (137 aa).

Residues 1–25 (MPTINQLVRQGRKSKTYKSDSPALS) are disordered. Asp-102 carries the 3-methylthioaspartic acid modification.

It belongs to the universal ribosomal protein uS12 family. Part of the 30S ribosomal subunit. Contacts proteins S8 and S17. May interact with IF1 in the 30S initiation complex.

In terms of biological role, with S4 and S5 plays an important role in translational accuracy. Functionally, interacts with and stabilizes bases of the 16S rRNA that are involved in tRNA selection in the A site and with the mRNA backbone. Located at the interface of the 30S and 50S subunits, it traverses the body of the 30S subunit contacting proteins on the other side and probably holding the rRNA structure together. The combined cluster of proteins S8, S12 and S17 appears to hold together the shoulder and platform of the 30S subunit. This Finegoldia magna (strain ATCC 29328 / DSM 20472 / WAL 2508) (Peptostreptococcus magnus) protein is Small ribosomal subunit protein uS12.